The following is a 317-amino-acid chain: MQIALAPMEGLVDDILRDALTKVGGIDWCVTEFIRVSERLMPAHYFYKYASEFHNGAKTDAGTPLRLQLLGSDPVCLAENAAFACELGAPVLDLNFGCPAKTVNRSRGGAILLKEPELLHTIVSQVRRAVPKDIPVTAKMRLGYENTDGALDCARALADGGAAQIVVHARTKVDGYKPPAHWEWIARIQEVVKVPVVANGEIWTVEDWRRCREICGARDIMIGRGLVARPDLARQIAAAQKGEEVVPMTWAELQPMLRTFWQACLVKMTLVQAPGRLKQWLVLLTKSYPEATLMFNTLRRETDCDRITVLLGCSTKS.

FMN-binding positions include 7 to 9 (PME) and Gln68. Residue Cys98 is the Proton donor of the active site. FMN is bound by residues Lys139, 199 to 201 (NGE), and 223 to 224 (GR).

This sequence belongs to the Dus family. DusC subfamily. FMN is required as a cofactor.

The catalysed reaction is 5,6-dihydrouridine(16) in tRNA + NADP(+) = uridine(16) in tRNA + NADPH + H(+). It carries out the reaction 5,6-dihydrouridine(16) in tRNA + NAD(+) = uridine(16) in tRNA + NADH + H(+). In terms of biological role, catalyzes the synthesis of 5,6-dihydrouridine (D), a modified base found in the D-loop of most tRNAs, via the reduction of the C5-C6 double bond in target uridines. Specifically modifies U16 in tRNAs. The protein is tRNA-dihydrouridine(16) synthase of Pseudomonas syringae pv. tomato (strain ATCC BAA-871 / DC3000).